The sequence spans 404 residues: Deoxyguanosinetriphosphate triphosphohydrolase-like protein (404 aa).

Positions 1 to 33 (MSVGMAAPRAAYGCDPDRSRGRQFAEPPSNNRS) are disordered. An HD domain is found at 69 to 217 (RLTHSLEVAQ…AAIADDIAYD (149 aa)).

Belongs to the dGTPase family. Type 2 subfamily.

This is Deoxyguanosinetriphosphate triphosphohydrolase-like protein from Rhodopseudomonas palustris (strain BisB5).